The chain runs to 198 residues: V-type proton ATPase subunit E (198 aa).

Belongs to the V-ATPase E subunit family.

Produces ATP from ADP in the presence of a proton gradient across the membrane. This is V-type proton ATPase subunit E from Borrelia duttonii (strain Ly).